Consider the following 337-residue polypeptide: 5-formaminoimidazole-4-carboxamide-1-(beta)-D-ribofuranosyl 5'-monophosphate synthetase (337 aa).

2 residues coordinate 5-amino-1-(5-phospho-beta-D-ribosyl)imidazole-4-carboxamide: H9 and S73. The ATP-grasp domain occupies 94–324 (KKIFEWEADQ…IGRRIAREIR (231 aa)). ATP contacts are provided by residues 124 to 184 (PEDV…VPMY) and E206. A 5-amino-1-(5-phospho-beta-D-ribosyl)imidazole-4-carboxamide-binding site is contributed by N234. The Mg(2+) site is built by E273 and E286.

Belongs to the phosphohexose mutase family. Requires Mg(2+) as cofactor. Mn(2+) serves as cofactor.

The enzyme catalyses 5-amino-1-(5-phospho-beta-D-ribosyl)imidazole-4-carboxamide + formate + ATP = 5-formamido-1-(5-phospho-D-ribosyl)imidazole-4-carboxamide + ADP + phosphate. The protein operates within purine metabolism; IMP biosynthesis via de novo pathway; 5-formamido-1-(5-phospho-D-ribosyl)imidazole-4-carboxamide from 5-amino-1-(5-phospho-D-ribosyl)imidazole-4-carboxamide (formate route): step 1/1. Catalyzes the ATP- and formate-dependent formylation of 5-aminoimidazole-4-carboxamide-1-beta-d-ribofuranosyl 5'-monophosphate (AICAR) to 5-formaminoimidazole-4-carboxamide-1-beta-d-ribofuranosyl 5'-monophosphate (FAICAR) in the absence of folates. The polypeptide is 5-formaminoimidazole-4-carboxamide-1-(beta)-D-ribofuranosyl 5'-monophosphate synthetase (Saccharolobus solfataricus (strain ATCC 35092 / DSM 1617 / JCM 11322 / P2) (Sulfolobus solfataricus)).